The following is a 504-amino-acid chain: Signal recognition particle subunit SRP54 (504 aa).

The interval methionine 1 to leucine 295 is NG domain. GTP is bound by residues glycine 108–threonine 115, aspartate 190–arginine 194, and threonine 248–aspartate 251. Residues glycine 296–methionine 504 form an M-domain region.

It belongs to the GTP-binding SRP family. SRP54 subfamily. As to quaternary structure, component of a signal recognition particle (SRP) complex that consists of a 7SL RNA molecule of 300 nucleotides and six protein subunits: SRP72, SRP68, SRP54, SRP19, SRP14 and SRP9. Interacts with RNPS1. Interacts with the SRP receptor subunit SRPRA.

Its subcellular location is the nucleus speckle. The protein resides in the cytoplasm. The protein localises to the endoplasmic reticulum. It carries out the reaction GTP + H2O = GDP + phosphate + H(+). Component of the signal recognition particle (SRP) complex, a ribonucleoprotein complex that mediates the cotranslational targeting of secretory and membrane proteins to the endoplasmic reticulum (ER). As part of the SRP complex, associates with the SRP receptor (SR) component SRPRA to target secretory proteins to the endoplasmic reticulum membrane. Binds to the signal sequence of presecretory proteins when they emerge from the ribosomes. Displays basal GTPase activity, and stimulates reciprocal GTPase activation of the SR subunit SRPRA. Forms a guanosine 5'-triphosphate (GTP)-dependent complex with the SR subunit SRPRA. SR compaction and GTPase mediated rearrangement of SR drive SRP-mediated cotranslational protein translocation into the ER. Requires the presence of SRP9/SRP14 and/or SRP19 to stably interact with RNA. Plays a role in proliferation and differentiation of granulocytic cells, neutrophils migration capacity and exocrine pancreas development. The sequence is that of Signal recognition particle subunit SRP54 from Homo sapiens (Human).